We begin with the raw amino-acid sequence, 490 residues long: Betaine aldehyde dehydrogenase (490 aa).

Asp93 is a binding site for K(+). Residue 150–152 (GAW) coordinates NAD(+). Lys162 functions as the Charge relay system in the catalytic mechanism. 176 to 179 (KPSE) is a binding site for NAD(+). Val180 contacts K(+). 230-233 (GIAS) lines the NAD(+) pocket. Position 246 (Leu246) interacts with K(+). Glu252 (proton acceptor) is an active-site residue. The NAD(+) site is built by Gly254, Cys286, and Glu387. Residue Cys286 is the Nucleophile of the active site. At Cys286 the chain carries Cysteine sulfenic acid (-SOH). K(+)-binding residues include Lys457 and Gly460. The Charge relay system role is filled by Glu464.

This sequence belongs to the aldehyde dehydrogenase family. In terms of assembly, dimer of dimers. Requires K(+) as cofactor.

It catalyses the reaction betaine aldehyde + NAD(+) + H2O = glycine betaine + NADH + 2 H(+). It participates in amine and polyamine biosynthesis; betaine biosynthesis via choline pathway; betaine from betaine aldehyde: step 1/1. Functionally, involved in the biosynthesis of the osmoprotectant glycine betaine. Catalyzes the irreversible oxidation of betaine aldehyde to the corresponding acid. The chain is Betaine aldehyde dehydrogenase from Pectobacterium atrosepticum (strain SCRI 1043 / ATCC BAA-672) (Erwinia carotovora subsp. atroseptica).